Consider the following 103-residue polypeptide: Acylphosphatase-2 (103 aa).

Ser2 bears the N-acetylserine mark. An Acylphosphatase-like domain is found at 13 to 103; that stretch reads SVDYEVFGRV…LDFSGFSTRY (91 aa). At Cys26 the chain carries S-glutathionyl cysteine; alternate. Catalysis depends on residues Arg28 and Asn46.

The protein belongs to the acylphosphatase family. As to quaternary structure, monomer (TU1) or homodimer (TU3) in absence of reducing factors; disulfide linked.

The catalysed reaction is an acyl phosphate + H2O = a carboxylate + phosphate + H(+). Its physiological role is not yet clear. The protein is Acylphosphatase-2 (ACYP2) of Meleagris gallopavo (Wild turkey).